The following is a 334-amino-acid chain: MKKNQFLKESDVTAESVFFMKRRQVLKALGISAAAFSLPHAAHADLLSWFKGNDRPPAPAGKPLEFSKPAAWQNNLPLTPADKVSGYNNFYEFGLDKADPAANAGSLKTDPWTLKISGEVAKPLTLDHDDLTRRFPLEERIYRMRCVEAWSMVVPWIGFPLHKLLALAEPTSNAKYVAFETIYAPEQMPGQQDRFIGGGLKYPYVEGLRLDEAMHPLTLMTVGVYGKALPPQNGAPVRLIVPWKYGFKGIKSIVSIKLTRERPPTTWNLVAPDEYGFYANVNPHVDHPRWSQATERFIGSGGILDVQRQPTLLFNGYADQVASLYRGLDLRENF.

Residues 1 to 44 (MKKNQFLKESDVTAESVFFMKRRQVLKALGISAAAFSLPHAAHA) constitute a signal peptide (tat-type signal). Residues Asn88, 91-92 (YE), Cys146, Thr181, Asn233, Arg238, and 249-251 (GIK) contribute to the Mo-molybdopterin site.

The protein belongs to the MsrP family. As to quaternary structure, heterodimer of a catalytic subunit (MsrP) and a heme-binding subunit (MsrQ). It depends on Mo-molybdopterin as a cofactor. Predicted to be exported by the Tat system. The position of the signal peptide cleavage has not been experimentally proven.

It is found in the periplasm. The enzyme catalyses L-methionyl-[protein] + a quinone + H2O = L-methionyl-(S)-S-oxide-[protein] + a quinol. It carries out the reaction L-methionyl-[protein] + a quinone + H2O = L-methionyl-(R)-S-oxide-[protein] + a quinol. Its function is as follows. Part of the MsrPQ system that repairs oxidized periplasmic proteins containing methionine sulfoxide residues (Met-O), using respiratory chain electrons. Thus protects these proteins from oxidative-stress damage caused by reactive species of oxygen and chlorine generated by the host defense mechanisms. MsrPQ is essential for the maintenance of envelope integrity under bleach stress, rescuing a wide series of structurally unrelated periplasmic proteins from methionine oxidation, including the primary periplasmic chaperone SurA and the lipoprotein Pal. The catalytic subunit MsrP is non-stereospecific, being able to reduce both (R-) and (S-) diastereoisomers of methionine sulfoxide. This chain is Protein-methionine-sulfoxide reductase catalytic subunit MsrP, found in Escherichia coli O6:H1 (strain CFT073 / ATCC 700928 / UPEC).